A 138-amino-acid chain; its full sequence is Large ribosomal subunit protein mL43 (138 aa).

Belongs to the mitochondrion-specific ribosomal protein mL43 family. As to quaternary structure, component of the mitochondrial large ribosomal subunit (mt-LSU). Mature N.crassa 74S mitochondrial ribosomes consist of a small (37S) and a large (54S) subunit. The 37S small subunit contains a 16S ribosomal RNA (16S mt-rRNA) and 32 different proteins. The 54S large subunit contains a 23S rRNA (23S mt-rRNA) and 42 different proteins.

It localises to the mitochondrion. Component of the mitochondrial ribosome (mitoribosome), a dedicated translation machinery responsible for the synthesis of mitochondrial genome-encoded proteins, including at least some of the essential transmembrane subunits of the mitochondrial respiratory chain. The mitoribosomes are attached to the mitochondrial inner membrane and translation products are cotranslationally integrated into the membrane. The sequence is that of Large ribosomal subunit protein mL43 (mrpl51) from Neurospora crassa (strain ATCC 24698 / 74-OR23-1A / CBS 708.71 / DSM 1257 / FGSC 987).